Here is a 53-residue protein sequence, read N- to C-terminus: Kunitz-type trypsin inhibitor alpha chain (53 aa).

The disordered stretch occupies residues 33-53; that stretch reads GWGLPRRTGDESCPLNVKAVR.

Belongs to the protease inhibitor I3 (leguminous Kunitz-type inhibitor) family. Heterodimer of an alpha and a beta chain linked by a disulfide bond.

Inhibits trypsin with a Ki of 0.25 uM. Inhibits the trypsin-like proteases in midguts of larval H.armigera, S.exigua, and P.rapae. The chain is Kunitz-type trypsin inhibitor alpha chain from Albizia kalkora (Kalkora mimosa).